The following is a 105-amino-acid chain: Thioredoxin (105 aa).

Residues 2–103 (VKQIESKSAF…KEKLEATIKG (102 aa)) form the Thioredoxin domain. K3 bears the N6-acetyllysine mark. K8 bears the N6-succinyllysine mark. Catalysis depends on nucleophile residues C32 and C35. The cysteines at positions 32 and 35 are disulfide-linked. K39 carries the post-translational modification N6-acetyllysine. C62 and C69 each carry S-nitrosocysteine. S-nitrosocysteine; alternate is present on C73. N6-acetyllysine; alternate is present on K94. K94 is modified (N6-succinyllysine; alternate).

Belongs to the thioredoxin family. In terms of assembly, homodimer; disulfide-linked. Interacts with TXNIP through the redox-active site. Interacts with MAP3K5 and CASP3. Interacts with APEX1; the interaction stimulates the FOS/JUN AP-1 DNA-binding activity in a redox-dependent manner. Post-translationally, in the fully reduced protein, both Cys-69 and Cys-73 are nitrosylated in response to nitric oxide (NO). When two disulfide bonds are present in the protein, only Cys-73 is nitrosylated. Cys-73 can serve as donor for nitrosylation of target proteins.

The protein localises to the nucleus. The protein resides in the cytoplasm. It localises to the secreted. Functionally, participates in various redox reactions through the reversible oxidation of its active center dithiol to a disulfide and catalyzes dithiol-disulfide exchange reactions. Plays a role in the reversible S-nitrosylation of cysteine residues in target proteins, and thereby contributes to the response to intracellular nitric oxide. Nitrosylates the active site Cys of CASP3 in response to nitric oxide (NO), and thereby inhibits caspase-3 activity. Induces the FOS/JUN AP-1 DNA binding activity in ionizing radiation (IR) cells through its oxidation/reduction status and stimulates AP-1 transcriptional activity. The chain is Thioredoxin (TXN) from Equus caballus (Horse).